Reading from the N-terminus, the 567-residue chain is ERO1-like protein 2 (567 aa).

The first 22 residues, 1 to 22, serve as a signal peptide directing secretion; it reads MKIAKGLVGLLILYKNVCQVLC. N49 carries an N-linked (GlcNAc...) asparagine glycan. Cystine bridges form between C88–C386, C98–C103, C154–C325, and C389–C392. The FAD site is built by R188, T190, W201, S258, H261, and K290. Catalysis depends on C389, which acts as the Nucleophile. The active site involves C392. The N-linked (GlcNAc...) asparagine glycan is linked to N546.

It belongs to the EROs family. May function both as a monomer and a homodimer. FAD serves as cofactor. In terms of processing, N-glycosylated.

Its subcellular location is the endoplasmic reticulum membrane. Essential oxidoreductase that oxidizes proteins in the endoplasmic reticulum to produce disulfide bonds. Acts by oxidizing directly pdi1 isomerase through a direct disulfide exchange. Does not act as a direct oxidant of folding substrate, but relies on pdi1 to transfer oxidizing equivalent. Does not oxidize all pdi related proteins, suggesting that it can discriminate between pdi1 and related proteins. Its reoxidation probably involves electron transfer to molecular oxygen via FAD. Acts independently of glutathione. May be responsible for a significant proportion of reactive oxygen species (ROS) in the cell, thereby being a source of oxidative stress. The protein is ERO1-like protein 2 (ero12) of Schizosaccharomyces pombe (strain 972 / ATCC 24843) (Fission yeast).